A 1309-amino-acid chain; its full sequence is Nuclear pore complex protein NUP1 (1309 aa).

Disordered regions lie at residues 1–58 (MASA…GGGW), 83–118 (RKRL…HKED), 173–210 (AADS…GSMN), 266–296 (RTPF…VTPR), 329–348 (SKWE…SGLK), 384–417 (ESPL…NLVP), 467–538 (LGNL…EEHP), 594–617 (SEAM…NGSL), and 635–680 (SNMA…VFPN). Residues 2–677 (ASAARGESSN…LEEPKKPAAV (676 aa)) form a 25 X 2 AA repeats of F-G region. The span at 22–32 (KFRKPTARRSQ) shows a compositional bias: basic residues. Gly residues predominate over residues 47-58 (GLGGGDVRGGGW). Positions 91-101 (TPLQSPEQQKQ) are enriched in polar residues. Basic and acidic residues predominate over residues 195 to 204 (PSHERDRTHP). Over residues 268–283 (PFPQKSPTMSLVTKPS) the composition is skewed to polar residues. Residues 396–405 (KTTHTSKDSA) are compositionally biased toward basic and acidic residues. Composition is skewed to polar residues over residues 597 to 617 (MPST…NGSL) and 635 to 659 (SNMA…SGKP). The segment covering 660–673 (TSEEKRIPLEEPKK) has biased composition (basic and acidic residues). Repeat 1 spans residues 711 to 712 (FG). Residues 719-865 (KPTESKKTFS…VKNATFGNTS (147 aa)) form a disordered region. Low complexity-rich tracts occupy residues 728–741 (SNSA…TSAA) and 767–783 (SSPS…SDNS). Residues 789 to 803 (STVQSFAATHNSSSI) are compositionally biased toward polar residues. Copy 2 of the repeat occupies 804–805 (FG). Over residues 809–827 (TSNDSNSQSTSASPLSSTS) the composition is skewed to low complexity. Tandem repeats lie at residues 831 to 832 (FG), 861 to 862 (FG), 869 to 870 (FG), 883 to 884 (FG), 898 to 899 (FG), 927 to 928 (FG), 956 to 957 (FG), 983 to 984 (FG), 1004 to 1005 (FG), 1029 to 1030 (FG), 1038 to 1039 (FG), and 1053 to 1054 (FG). The span at 1004 to 1023 (FGAGNAQTGNTGSGTTTSTQ) shows a compositional bias: low complexity. A disordered region spans residues 1004–1028 (FGAGNAQTGNTGSGTTTSTQSIPFQ). Positions 1068–1086 (TPQLSSTNSSASSSSTMSS) are enriched in low complexity. The tract at residues 1068-1105 (TPQLSSTNSSASSSSTMSSPLFGTSWQAPNSSPNSGPV) is disordered. Repeat unit 15 spans residues 1089 to 1090 (FG). Over residues 1096-1105 (PNSSPNSGPV) the composition is skewed to low complexity. A run of 10 repeats spans residues 1121 to 1122 (FG), 1137 to 1138 (FG), 1151 to 1152 (FG), 1153 to 1154 (FG), 1166 to 1167 (FG), 1177 to 1178 (FG), 1186 to 1187 (FG), 1224 to 1225 (FG), 1238 to 1239 (FG), and 1255 to 1256 (FG). The segment at 1278–1309 (FQGGGSFSLGSTGGGDKSGRRIFKAKKSTRKK) is disordered. Residues 1279 to 1293 (QGGGSFSLGSTGGGD) show a composition bias toward gly residues. Positions 1297 to 1309 (RRIFKAKKSTRKK) are enriched in basic residues.

In terms of assembly, part of the nuclear pore complex (NPC). The NPC has an eight-fold symmetrical structure comprising a central transport channel and two rings, the cytoplasmic and nuclear rings, to which eight filaments are attached. The cytoplasmic filaments have loose ends, while the nuclear filaments are joined in a distal ring, forming a nuclear basket. NPCs are highly dynamic in configuration and composition, and can be devided in 3 subcomplexes, the NUP62 subcomplex, the NUP107-160 subcomplex and the NUP93 subcomplex, containing approximately 30 different nucleoporin proteins. Interacts with EER5, anchoring the TREX-2 complex on the nuclear pore complex. Interacts with UCH1 and UCH2.

It is found in the nucleus envelope. The protein resides in the nucleus. Its subcellular location is the nuclear pore complex. It localises to the cytoplasm. The protein localises to the cytosol. Nucleoporin required for nuclear mRNA export. Functions as an adapter and/or regulator molecule in the periphery of the nuclear pore complex (NPC). May interact with importin proteins and mediate active nucleocytoplasmic transport through the NPC. Involved in regulation of nuclear morphology. The sequence is that of Nuclear pore complex protein NUP1 from Arabidopsis thaliana (Mouse-ear cress).